The following is a 231-amino-acid chain: Casparian strip membrane protein 1 (231 aa).

Residues 1–69 (MSTSETATVI…FRQSDRGSRC (69 aa)) lie on the Cytoplasmic side of the membrane. The chain crosses the membrane as a helical span at residues 70–90 (LAFLDFLLRIAAFGPALAAAI). Topologically, residues 91 to 117 (ATGTSDETLSVFTEFFQFRARFDDFPA) are extracellular. A helical membrane pass occupies residues 118–138 (FLFLMVANAIAAGYLVLSLPF). Over 139–152 (SAVVVLRPQATGLR) the chain is Cytoplasmic. The helical transmembrane segment at 153–173 (LLLLVCDTIMIGLLTAAAAAA) threads the bilayer. The Extracellular portion of the chain corresponds to 174–207 (AAIVELAHNGNERANWVAICMQFHGFCQRTSGAV). A helical transmembrane segment spans residues 208–228 (VASFLSVFLFLLLVVLAAFAI). Over 229–231 (RKR) the chain is Cytoplasmic.

This sequence belongs to the Casparian strip membrane proteins (CASP) family. In terms of assembly, homodimer and heterodimers.

The protein resides in the cell membrane. Regulates membrane-cell wall junctions and localized cell wall deposition. Required for establishment of the Casparian strip membrane domain (CSD) and the subsequent formation of Casparian strips, a cell wall modification of the root endodermis that determines an apoplastic barrier between the intraorganismal apoplasm and the extraorganismal apoplasm and prevents lateral diffusion. In Brachypodium distachyon (Purple false brome), this protein is Casparian strip membrane protein 1.